The sequence spans 283 residues: Stage II sporulation protein Q (283 aa).

The helical transmembrane segment at 22–42 (WVFPAIYLVSAAVILTAVLWY) threads the bilayer. A disordered region spans residues 228 to 283 (EKAATQETEESIQQSSEKKDGSTEKGTEEKSGEKKDDSTDKSGSKESSTTEDTEQS). The span at 243-271 (SEKKDGSTEKGTEEKSGEKKDDSTDKSGS) shows a compositional bias: basic and acidic residues.

In terms of assembly, interacts with SpoIIIAH and SpoIIE.

It localises to the forespore membrane. Its function is as follows. Involved in forespore engulfment and required for anchoring membrane proteins on the forespore side of the septal membrane. Forms a channel with SpoIIIAH that is open on the forespore end and closed (or gated) on the mother cell end. This allows sigma-E-directed gene expression in the mother-cell compartment of the sporangium to trigger the activation of sigma-G forespore-specific gene expression by a pathway of intercellular signaling. The chain is Stage II sporulation protein Q (spoIIQ) from Bacillus subtilis (strain 168).